A 424-amino-acid polypeptide reads, in one-letter code: UPF0229 protein Sde_0732 (424 aa).

The segment at 52-109 (IGIPSKDISEPVFHHDSGGVDTRVLPGNDQFHSGDRIQRPPSGQGGGGSGKGASDSGE) is disordered. Positions 58-69 (DISEPVFHHDSG) are enriched in basic and acidic residues.

Belongs to the UPF0229 family.

This Saccharophagus degradans (strain 2-40 / ATCC 43961 / DSM 17024) protein is UPF0229 protein Sde_0732.